The chain runs to 99 residues: Ferredoxin-2 (99 aa).

The region spanning 4–96 is the 2Fe-2S ferredoxin-type domain; that stretch reads YQVRLINKKR…DCTIRTHQEA (93 aa). Residues C42, C47, C50, and C80 each contribute to the [2Fe-2S] cluster site.

The protein belongs to the 2Fe2S plant-type ferredoxin family. It depends on [2Fe-2S] cluster as a cofactor.

Ferredoxins are iron-sulfur proteins that transfer electrons in a wide variety of metabolic reactions. Donates electrons to the nitrogenase. This chain is Ferredoxin-2 (fdxH), found in Leptolyngbya boryana (Plectonema boryanum).